Reading from the N-terminus, the 218-residue chain is Trichothecene biosynthesis transcription regulator TRI6 (218 aa).

The tract at residues 154–181 (SQSTNDPGDAGKKGFATRKDRARHEAKH) is disordered. Over residues 162 to 176 (DAGKKGFATRKDRAR) the composition is skewed to basic and acidic residues. The segment at 185–215 (IRCQWRDNNGDQCTRTFSRMDNMRDHFRRIH) adopts a C2H2-type zinc-finger fold.

Its subcellular location is the nucleus. Functionally, transcriptional activator of part of the trichothecene biosynthesis cluster that mediates the production of the antimicrobial trichothecene harzianum A (HA) that plays a role in Botrytis cinerea antagonistic activity and plant defense priming. Regulates expression of both trichothecene and mevalonate pathway genes. This Trichoderma arundinaceum protein is Trichothecene biosynthesis transcription regulator TRI6.